The sequence spans 103 residues: Co-chaperonin GroES (103 aa).

It belongs to the GroES chaperonin family. As to quaternary structure, heptamer of 7 subunits arranged in a ring. Interacts with the chaperonin GroEL.

Its subcellular location is the cytoplasm. Together with the chaperonin GroEL, plays an essential role in assisting protein folding. The GroEL-GroES system forms a nano-cage that allows encapsulation of the non-native substrate proteins and provides a physical environment optimized to promote and accelerate protein folding. GroES binds to the apical surface of the GroEL ring, thereby capping the opening of the GroEL channel. This is Co-chaperonin GroES from Picosynechococcus sp. (strain ATCC 27264 / PCC 7002 / PR-6) (Agmenellum quadruplicatum).